The sequence spans 713 residues: Vacuolar amino acid transporter 4 (713 aa).

Residues 1 to 33 form a disordered region; that stretch reads MVTNNGDGEHLGIRRNGNLRHPSNNMKIPRRAQ. The Vacuolar segment spans residues 1 to 242; sequence MVTNNGDGEH…IDKVPFLTRN (242 aa). The segment covering 21–33 has biased composition (polar residues); sequence HPSNNMKIPRRAQ. S88 carries the phosphoserine modification. Positions 99 to 121 are disordered; sequence RSSVSHGNEAIPRVNPTKNSSAS. Residues S130 and S165 each carry the phosphoserine modification. Positions 200-233 are disordered; it reads KRQEHQLNDSASSDFTSHESDSINQSSPSSNQDI. Residues 221–231 show a composition bias toward low complexity; that stretch reads SINQSSPSSNQ. The helical transmembrane segment at 243-263 threads the bilayer; it reads FLEFLYVFGHFAGESFEDDFI. Residues 264 to 301 lie on the Cytoplasmic side of the membrane; it reads PDSSNMMIRGEDERSALLSRPDHMKVLPSAKGTTSTKK. Residues 302–322 form a helical membrane-spanning segment; that stretch reads VFLILLKSFIGTGVLFLPNAF. At 323-326 the chain is on the vacuolar side; that stretch reads HNGG. A helical transmembrane segment spans residues 327–347; sequence LFFSVSMLAFFGIYSYWCYYI. Residues 348-373 are Cytoplasmic-facing; the sequence is LVQAKSSCGVSSFGDIGLKLYGPWMR. The chain crosses the membrane as a helical span at residues 374 to 394; it reads IIILFSLVITQVGFSGAYMIF. The Vacuolar portion of the chain corresponds to 395–410; that stretch reads TAKNLQAFLDNVFHVG. A helical transmembrane segment spans residues 411 to 431; it reads VLPLSYLMVFQTIIFIPLSFI. Over 432–438 the chain is Cytoplasmic; that stretch reads RNISKLS. Residues 439 to 459 form a helical membrane-spanning segment; sequence LPSLLANFFIMAGLVIVIIFT. At 460 to 483 the chain is on the vacuolar side; the sequence is AKRLFFDLMGTPAMGVVYGLNADR. A helical transmembrane segment spans residues 484–504; that stretch reads WTLFIGTAIFAFEGIGLIIPV. The Cytoplasmic segment spans residues 505–515; sequence QDSMRNPEKFP. The helical transmembrane segment at 516 to 536 threads the bilayer; it reads LVLALVILTATILFISIATLG. Over 537–561 the chain is Vacuolar; that stretch reads YLAYGSNVQTVILLNLPQSNIFVNL. A helical membrane pass occupies residues 562-582; the sequence is IQLFYSIAIMLSTPLQLFPAI. Residues 583-621 are Cytoplasmic-facing; that stretch reads KIIENKFFPKFTKIYVKHDDLTTRVELRPNSGKLNWKIK. Residues 622 to 642 form a helical membrane-spanning segment; that stretch reads WLKNFIRSIIVIIVVSIAYFG. Over 643–648 the chain is Vacuolar; that stretch reads SDNLDK. The helical transmembrane segment at 649-669 threads the bilayer; sequence FVSVIGSLACIPLVYIYPSML. The Cytoplasmic portion of the chain corresponds to 670 to 692; sequence HLRGNSLPETKGEFWRFKPMLDT. A helical membrane pass occupies residues 693–711; sequence ILIFFGIASMLYTSYQSIF. Residues 712-713 are Vacuolar-facing; sequence GV.

This sequence belongs to the amino acid/polyamine transporter 2 family.

It localises to the vacuole membrane. Its function is as follows. Involved in amino acid efflux from the vacuole to the cytoplasm. Capable of transporting large neutral amino acids including tyrosine, glutamine, asparagine, isoleucine and leucine. The polypeptide is Vacuolar amino acid transporter 4 (AVT4) (Saccharomyces cerevisiae (strain ATCC 204508 / S288c) (Baker's yeast)).